A 1439-amino-acid polypeptide reads, in one-letter code: Fanconi anemia group A protein homolog (1439 aa).

The interval 1–20 (MPGSPARGAAMGGGPRGLRK) is disordered. The short motif at 19 to 35 (RKTWTELLAGRVKKQKY) is the Nuclear localization signal element.

Belongs to the multisubunit FA complex composed of FANCA, FANCB, FANCC, FANCE, FANCF, FANCG, FANCL/PHF9 and FANCM. In complex with FANCF, FANCG and FANCL, but not with FANCC, nor FANCE, interacts with HES1; this interaction may be essential for the stability and nuclear localization of FA core complex proteins. The complex with FANCC and FANCG may also include EIF2AK2 and HSP70. Interacts with FAAP20; interaction is direct. In terms of processing, phosphorylated primarily on serine residues. Phosphorylation is required for the formation of the nuclear complex. As to expression, mainly expressed in testis and lymphoid tissues like thymus, lymph nodes, and spleen, and at lower levels in kidney and ovary.

The protein localises to the nucleus. It localises to the cytoplasm. DNA repair protein that may operate in a postreplication repair or a cell cycle checkpoint function. May be involved in interstrand DNA cross-link repair and in the maintenance of normal chromosome stability. This is Fanconi anemia group A protein homolog (Fanca) from Mus musculus (Mouse).